Reading from the N-terminus, the 421-residue chain is Osmoprotective compounds-binding protein GgtB (421 aa).

The signal sequence occupies residues 1-18; the sequence is MKFFKITTLIISLIVLTS. Cys-19 is lipidated: N-palmitoyl cysteine. The S-diacylglycerol cysteine moiety is linked to residue Cys-19.

Belongs to the bacterial solute-binding protein 1 family. As to quaternary structure, the complex is composed of two ATP-binding proteins (GgtA), two transmembrane proteins (GgtC and GgtD) and a solute-binding protein (GgtB).

It is found in the cell membrane. Its function is as follows. Part of the ABC transporter complex GgtABCD involved in the uptake of the osmoprotective compounds glucosylglycerol (GG), sucrose and trehalose. Binds glucosylglycerol and exhibits a somewhat lower affinity towards sucrose and a substantially lower affinity towards trehalose. This is Osmoprotective compounds-binding protein GgtB from Synechocystis sp. (strain ATCC 27184 / PCC 6803 / Kazusa).